A 476-amino-acid polypeptide reads, in one-letter code: Eukaryotic translation initiation factor 3 subunit L (476 aa).

One can recognise a PCI domain in the interval 257–452 (DAIRMFSHIL…DLDYALENDL (196 aa)).

It belongs to the eIF-3 subunit L family. As to quaternary structure, component of the eukaryotic translation initiation factor 3 (eIF-3) complex.

It localises to the cytoplasm. Functionally, component of the eukaryotic translation initiation factor 3 (eIF-3) complex, which is involved in protein synthesis of a specialized repertoire of mRNAs and, together with other initiation factors, stimulates binding of mRNA and methionyl-tRNAi to the 40S ribosome. The eIF-3 complex specifically targets and initiates translation of a subset of mRNAs involved in cell proliferation. This Aspergillus oryzae (strain ATCC 42149 / RIB 40) (Yellow koji mold) protein is Eukaryotic translation initiation factor 3 subunit L.